The following is a 506-amino-acid chain: Histidine--tRNA ligase (506 aa).

This sequence belongs to the class-II aminoacyl-tRNA synthetase family. Homodimer.

Its subcellular location is the cytoplasm. It carries out the reaction tRNA(His) + L-histidine + ATP = L-histidyl-tRNA(His) + AMP + diphosphate + H(+). In Bradyrhizobium diazoefficiens (strain JCM 10833 / BCRC 13528 / IAM 13628 / NBRC 14792 / USDA 110), this protein is Histidine--tRNA ligase (hisS).